We begin with the raw amino-acid sequence, 496 residues long: uncharacterized protein (496 aa).

The next 13 membrane-spanning stretches (helical) occupy residues L5–A25, F45–L65, V77–P97, L127–I147, V161–I181, I193–G213, I239–A259, F278–L298, F325–A345, M374–V394, L396–F416, A424–S444, and E450–V470.

Belongs to the sodium:solute symporter (SSF) (TC 2.A.21) family.

It is found in the cell membrane. This is an uncharacterized protein from Bacillus subtilis (strain 168).